Consider the following 534-residue polypeptide: Probable glycine dehydrogenase (decarboxylating) subunit 2 (534 aa).

Lys-273 bears the N6-(pyridoxal phosphate)lysine mark.

It belongs to the GcvP family. C-terminal subunit subfamily. The glycine cleavage system is composed of four proteins: P, T, L and H. In this organism, the P 'protein' is a heterodimer of two subunits. It depends on pyridoxal 5'-phosphate as a cofactor.

It catalyses the reaction N(6)-[(R)-lipoyl]-L-lysyl-[glycine-cleavage complex H protein] + glycine + H(+) = N(6)-[(R)-S(8)-aminomethyldihydrolipoyl]-L-lysyl-[glycine-cleavage complex H protein] + CO2. The glycine cleavage system catalyzes the degradation of glycine. The P protein binds the alpha-amino group of glycine through its pyridoxal phosphate cofactor; CO(2) is released and the remaining methylamine moiety is then transferred to the lipoamide cofactor of the H protein. This is Probable glycine dehydrogenase (decarboxylating) subunit 2 from Bacillus cereus (strain ATCC 14579 / DSM 31 / CCUG 7414 / JCM 2152 / NBRC 15305 / NCIMB 9373 / NCTC 2599 / NRRL B-3711).